The sequence spans 233 residues: H-2 class II histocompatibility antigen, A-R alpha chain (233 aa).

An alpha-1 region spans residues 1-88; that stretch reads EDDIEADHVG…KRSNFTPAAN (88 aa). Over 1 to 195 the chain is Extracellular; it reads EDDIEADHVG…IPAPMSELTE (195 aa). The alpha-2 stretch occupies residues 89–182; sequence EAPQATVFPK…GLEEPVLKHW (94 aa). The region spanning 91–183 is the Ig-like C1-type domain; sequence PQATVFPKSP…LEEPVLKHWE (93 aa). A disulfide bond links Cys111 and Cys167. The N-linked (GlcNAc...) asparagine glycan is linked to Asn122. Residues 183 to 195 form a connecting peptide region; it reads EPEIPAPMSELTE. A helical membrane pass occupies residues 196–221; it reads TVVCALGLSVGLVGIVVGTIFIIQGL. Residues 222–233 lie on the Cytoplasmic side of the membrane; the sequence is RSGGTSRHPGPL.

This sequence belongs to the MHC class II family.

It is found in the membrane. This Mus musculus (Mouse) protein is H-2 class II histocompatibility antigen, A-R alpha chain (H2-Aa).